Here is a 352-residue protein sequence, read N- to C-terminus: Ion-translocating oxidoreductase complex subunit D (352 aa).

The next 4 membrane-spanning stretches (helical) occupy residues 20 to 40 (IMLL…WFFG), 42 to 62 (GTLV…ALVL), 89 to 109 (IPPL…VIIA), and 123 to 143 (PAMI…TSWL). Threonine 187 is modified (FMN phosphoryl threonine). 5 consecutive transmembrane segments (helical) span residues 214–234 (ILAG…GVWL), 242–262 (WHIP…GWLF), 267–287 (LAAP…FFIL), 301–321 (LIFG…GGYP), and 322–342 (DGVA…DYYT).

The protein belongs to the NqrB/RnfD family. As to quaternary structure, the complex is composed of six subunits: RsxA, RsxB, RsxC, RsxD, RsxE and RsxG. It depends on FMN as a cofactor.

Its subcellular location is the cell inner membrane. In terms of biological role, part of a membrane-bound complex that couples electron transfer with translocation of ions across the membrane. Required to maintain the reduced state of SoxR. The protein is Ion-translocating oxidoreductase complex subunit D of Escherichia coli O81 (strain ED1a).